The following is a 299-amino-acid chain: Bifunctional protein FolD 2 (299 aa).

NADP(+)-binding positions include 168 to 170 (GRS), Ser-193, and Ile-234.

This sequence belongs to the tetrahydrofolate dehydrogenase/cyclohydrolase family. In terms of assembly, homodimer.

It catalyses the reaction (6R)-5,10-methylene-5,6,7,8-tetrahydrofolate + NADP(+) = (6R)-5,10-methenyltetrahydrofolate + NADPH. The catalysed reaction is (6R)-5,10-methenyltetrahydrofolate + H2O = (6R)-10-formyltetrahydrofolate + H(+). It functions in the pathway one-carbon metabolism; tetrahydrofolate interconversion. Catalyzes the oxidation of 5,10-methylenetetrahydrofolate to 5,10-methenyltetrahydrofolate and then the hydrolysis of 5,10-methenyltetrahydrofolate to 10-formyltetrahydrofolate. This is Bifunctional protein FolD 2 from Rhizobium etli (strain ATCC 51251 / DSM 11541 / JCM 21823 / NBRC 15573 / CFN 42).